Here is a 515-residue protein sequence, read N- to C-terminus: 1-pyrroline-5-carboxylate dehydrogenase (515 aa).

Catalysis depends on residues E286 and C320.

This sequence belongs to the aldehyde dehydrogenase family. RocA subfamily.

The catalysed reaction is L-glutamate 5-semialdehyde + NAD(+) + H2O = L-glutamate + NADH + 2 H(+). The protein operates within amino-acid degradation; L-proline degradation into L-glutamate; L-glutamate from L-proline: step 2/2. The polypeptide is 1-pyrroline-5-carboxylate dehydrogenase (Geobacillus kaustophilus (strain HTA426)).